We begin with the raw amino-acid sequence, 516 residues long: Acetylcholine receptor subunit alpha-like (516 aa).

The N-terminal stretch at Met-1 to Gly-21 is a signal peptide. The Extracellular segment spans residues Asn-22–Tyr-243. N-linked (GlcNAc...) asparagine glycans are attached at residues Asn-45 and Asn-132. Intrachain disulfides connect Cys-149-Cys-163 and Cys-222-Cys-223. Asn-233 is a glycosylation site (N-linked (GlcNAc...) asparagine). A run of 3 helical transmembrane segments spans residues Thr-244–Leu-264, Leu-274–Pro-294, and Phe-306–Asn-326. The Cytoplasmic segment spans residues Val-327–Arg-465. The chain crosses the membrane as a helical span at residues Pro-466–Ala-486.

This sequence belongs to the ligand-gated ion channel (TC 1.A.9) family. Acetylcholine receptor (TC 1.A.9.1) subfamily.

Its subcellular location is the postsynaptic cell membrane. The protein resides in the cell membrane. After binding acetylcholine, the AChR responds by an extensive change in conformation that affects all subunits and leads to opening of an ion-conducting channel across the plasma membrane. This Manduca sexta (Tobacco hawkmoth) protein is Acetylcholine receptor subunit alpha-like (ARA1).